The following is a 62-amino-acid chain: Large ribosomal subunit protein uL30 (62 aa).

It belongs to the universal ribosomal protein uL30 family. As to quaternary structure, part of the 50S ribosomal subunit.

The chain is Large ribosomal subunit protein uL30 from Herpetosiphon aurantiacus (strain ATCC 23779 / DSM 785 / 114-95).